Consider the following 226-residue polypeptide: Transmembrane protein 204 (226 aa).

The Cytoplasmic segment spans residues Met1–Arg5. Residues Leu6–Phe26 form a helical membrane-spanning segment. The Extracellular segment spans residues Thr27 to Asn103. The chain crosses the membrane as a helical span at residues Leu104–Leu124. The Cytoplasmic segment spans residues Pro125–Glu136. A helical membrane pass occupies residues Ala137–Tyr157. Residues Arg158–Tyr170 lie on the Extracellular side of the membrane. N-linked (GlcNAc...) asparagine glycosylation occurs at Asn164. A helical transmembrane segment spans residues Leu171–Leu191. At His192–Cys226 the chain is on the cytoplasmic side.

Highly expressed in lung, heart, kidney and placenta. Lower expression in thymus, spleen, liver, testis and ovary. Expressed in endothelial and restricted epithelial cell populations.

The protein localises to the cell junction. The protein resides in the adherens junction. Its subcellular location is the cell membrane. Functionally, can influence paracellular permeability. Appears to be involved in cell-cell interactions through adherens. The protein is Transmembrane protein 204 (TMEM204) of Homo sapiens (Human).